The primary structure comprises 229 residues: Somatolactin (229 aa).

Residues 1–24 form the signal peptide; sequence MHLVSVIQRGVWAVLLWPNLLASS. Disulfide bonds link Cys29–Cys39, Cys87–Cys203, and Cys220–Cys228. 2 N-linked (GlcNAc...) asparagine glycosylation sites follow: Asn143 and Asn175.

It belongs to the somatotropin/prolactin family.

The protein resides in the secreted. In Cyclopterus lumpus (Lumpsucker), this protein is Somatolactin.